A 381-amino-acid chain; its full sequence is MSSRIARALALVVTLLHLTRLALSTCPAACHCPLEAPKCAPGVGLVRDGCGCCKVCAKQLNEDCSKTQPCDHTKGLECNFGASSTALKGICRAQSEGRPCEYNSRIYQNGESFQPNCKHQCTCIDGAVGCIPLCPQELSLPNLGCPNPRLVKVTGQCCEEWVCDEDSIKDPMEDQDGLLGKELGFDASEVELTRNNELIAVGKGSSLKRLPVFGMEPRILYNPLQGQKCIVQTTSWSQCSKTCGTGISTRVTNDNPECRLVKETRICEVRPCGQPVYSSLKKGKKCSKTKKSPEPVRFTYAGCLSVKKYRPKYCGSCVDGRCCTPQLTRTVKMRFRCEDGETFSKNVMMIQSCKCNYNCPHANEAAFPFYRLFNDIHKFRD.

Positions 1 to 24 (MSSRIARALALVVTLLHLTRLALS) are cleaved as a signal peptide. Positions 25–94 (TCPAACHCPL…TALKGICRAQ (70 aa)) constitute an IGFBP N-terminal domain. 6 disulfides stabilise this stretch: Cys26/Cys50, Cys30/Cys52, Cys32/Cys53, Cys39/Cys56, Cys64/Cys78, and Cys70/Cys91. Residues 98-164 (RPCEYNSRIY…GQCCEEWVCD (67 aa)) enclose the VWFC domain. Position 188 is a phosphoserine; by FAM20C (Ser188). One can recognise a TSP type-1 domain in the interval 228-273 (KCIVQTTSWSQCSKTCGTGISTRVTNDNPECRLVKETRICEVRPCG). The tract at residues 279-315 (SLKKGKKCSKTKKSPEPVRFTYAGCLSVKKYRPKYCG) is heparin-binding. 5 disulfide bridges follow: Cys286/Cys323, Cys303/Cys337, Cys314/Cys353, Cys317/Cys355, and Cys322/Cys359. The CTCK domain maps to 286 to 360 (CSKTKKSPEP…QSCKCNYNCP (75 aa)).

The protein belongs to the CCN family. In terms of assembly, interaction with integrins is heparin- and cell-type-dependent and promotes cell adhesion. In skin fibroblasts it binds ITGA6/ITGB1, in endothelial cells, binds ITGAV/ITGB3 and in platelets, ITGA2B/ITGB3. Binds, in vitro, ITGAV/ITGB5.

The protein localises to the secreted. Functionally, promotes cell proliferation, chemotaxis, angiogenesis and cell adhesion. Appears to play a role in wound healing by up-regulating, in skin fibroblasts, the expression of a number of genes involved in angiogenesis, inflammation and matrix remodeling including VEGA-A, VEGA-C, MMP1, MMP3, TIMP1, uPA, PAI-1 and integrins alpha-3 and alpha-5. CCN1-mediated gene regulation is dependent on heparin-binding. Down-regulates the expression of alpha-1 and alpha-2 subunits of collagen type-1. Promotes cell adhesion and adhesive signaling through integrin alpha-6/beta-1, cell migration through integrin alpha-v/beta-5 and cell proliferation through integrin alpha-v/beta-3. The polypeptide is CCN family member 1 (Homo sapiens (Human)).